The following is an 831-amino-acid chain: Periplasmic nitrate reductase (831 aa).

A signal peptide (tat-type signal) is located at residues 1–29 (MTLSRRDFIKQTAVAATASVAGVTLPAGA). Residues 41 to 97 (LKWSKAPCRFCGTGCGVTVAVRDNKVVATNGDPQAEVNKGLNCVKGYFLSKIMYGQD) enclose the 4Fe-4S Mo/W bis-MGD-type domain. Residues Cys-48, Cys-51, Cys-55, and Cys-83 each coordinate [4Fe-4S] cluster. Residues Lys-85, Gln-152, Asn-177, Cys-181, 214-221 (WGSNMAEM), 245-249 (STFTH), 264-266 (QTD), Met-375, Gln-379, Asn-485, 511-512 (SD), Lys-534, Asp-561, and 721-730 (TGRVLEHWHS) each bind Mo-bis(molybdopterin guanine dinucleotide). A substrate-binding site is contributed by Trp-797. Mo-bis(molybdopterin guanine dinucleotide) contacts are provided by Asn-805 and Lys-822.

The protein belongs to the prokaryotic molybdopterin-containing oxidoreductase family. NasA/NapA/NarB subfamily. In terms of assembly, component of the periplasmic nitrate reductase NapAB complex composed of NapA and NapB. [4Fe-4S] cluster is required as a cofactor. The cofactor is Mo-bis(molybdopterin guanine dinucleotide). Post-translationally, predicted to be exported by the Tat system. The position of the signal peptide cleavage has not been experimentally proven.

The protein resides in the periplasm. The catalysed reaction is 2 Fe(II)-[cytochrome] + nitrate + 2 H(+) = 2 Fe(III)-[cytochrome] + nitrite + H2O. Catalytic subunit of the periplasmic nitrate reductase complex NapAB. Receives electrons from NapB and catalyzes the reduction of nitrate to nitrite. This is Periplasmic nitrate reductase from Cupriavidus taiwanensis (strain DSM 17343 / BCRC 17206 / CCUG 44338 / CIP 107171 / LMG 19424 / R1) (Ralstonia taiwanensis (strain LMG 19424)).